A 726-amino-acid chain; its full sequence is Catalase-peroxidase (726 aa).

The interval 1–33 is disordered; the sequence is MSTTDDTHNTLSAGKCPFHQGGHDRSAGAGTAS. Residues 105–226 constitute a cross-link (tryptophyl-tyrosyl-methioninium (Trp-Tyr) (with M-252)); sequence WHGAGTYRSI…LGATEMGLIY (122 aa). The active-site Proton acceptor is histidine 106. The tryptophyl-tyrosyl-methioninium (Tyr-Met) (with W-105) cross-link spans 226–252; the sequence is YVNPEGPDHSGEPLSAAAAIRATFGNM. Residue histidine 267 participates in heme b binding.

Belongs to the peroxidase family. Peroxidase/catalase subfamily. Homodimer or homotetramer. Heme b is required as a cofactor. Formation of the three residue Trp-Tyr-Met cross-link is important for the catalase, but not the peroxidase activity of the enzyme.

It carries out the reaction H2O2 + AH2 = A + 2 H2O. The catalysed reaction is 2 H2O2 = O2 + 2 H2O. Its function is as follows. Bifunctional enzyme with both catalase and broad-spectrum peroxidase activity. This is Catalase-peroxidase from Salmonella arizonae (strain ATCC BAA-731 / CDC346-86 / RSK2980).